The following is a 641-amino-acid chain: Glycerol metabolism operon regulatory protein (641 aa).

Positions 1–318 are sensor domain; it reads MTTHTQDIGK…MRQLMTSQLG (318 aa). The 138-residue stretch at 52-189 folds into the GAF domain; the sequence is ALLTIAQAAL…AIAREVGNSL (138 aa). The 63-residue stretch at 203 to 265 folds into the PAS domain; the sequence is NQMYGLLESM…MLLRRAIKHA (63 aa). Residues 327–552 enclose the Sigma-54 factor interaction domain; the sequence is MSTDDPETRR…LNSIIENIAI (226 aa). Residues 355 to 362 and 415 to 424 contribute to the ATP site; these read GEEGVGKE and ANGGTLFLEK.

In terms of biological role, transcriptional activator of the glycerol utilization dha operon. The polypeptide is Glycerol metabolism operon regulatory protein (Citrobacter freundii).